The chain runs to 246 residues: Endonuclease NucS (246 aa).

Belongs to the NucS endonuclease family.

Its subcellular location is the cytoplasm. Cleaves both 3' and 5' ssDNA extremities of branched DNA structures. This chain is Endonuclease NucS, found in Corynebacterium urealyticum (strain ATCC 43042 / DSM 7109).